Here is a 391-residue protein sequence, read N- to C-terminus: MKIVLAYSGGLDTTVSIRWLKETFKAEIITVTVDVGQKDDFKKIEERAYIAGASKHYTIDAVRQFANNYIAYAIKLNGLYEGVYPLSTALARPLIAEKVVEVAKKEGAEAVAHGSTSKGNDQVRFDLAVKALYPDVKIIAPARIWNMTREDEIKYAKEKGIPIKVESDKYSIDENLWGRSIEGDIISDPSLEVPEDAFEWTKQIYNKKEIVSIEFSNGVPTAVNGEKMELNKLVDFLNLKFGSHGFGRVEHIENRVVGFKSREVYEVPAALGLIYAHIDLEKTIYTPMELRFKRHIDQLWSDLVYQGLWFEPLRETLHKVADEMNKWISGEAKVEVSNGSFRIVGRESEYSPYSEKIASYNKGWYPSDEMARGFIEIWGMHSLIARRVRGL.

An ATP-binding site is contributed by 6 to 14 (AYSGGLDTT). L-citrulline is bound at residue tyrosine 84. Residue glycine 114 coordinates ATP. L-aspartate is bound by residues threonine 116, asparagine 120, and aspartate 121. Asparagine 120 serves as a coordination point for L-citrulline. 5 residues coordinate L-citrulline: arginine 124, serine 171, serine 180, glutamate 253, and tyrosine 265.

The protein belongs to the argininosuccinate synthase family. Type 1 subfamily. Homotetramer.

It localises to the cytoplasm. It carries out the reaction L-citrulline + L-aspartate + ATP = 2-(N(omega)-L-arginino)succinate + AMP + diphosphate + H(+). It functions in the pathway amino-acid biosynthesis; L-arginine biosynthesis; L-arginine from L-ornithine and carbamoyl phosphate: step 2/3. In Saccharolobus solfataricus (strain ATCC 35092 / DSM 1617 / JCM 11322 / P2) (Sulfolobus solfataricus), this protein is Argininosuccinate synthase.